Here is a 175-residue protein sequence, read N- to C-terminus: Large ribosomal subunit protein uL15 (175 aa).

A compositionally biased stretch (basic and acidic residues) spans 1-13; the sequence is MTIKLNELRDNNG. 2 disordered regions span residues 1–44 and 150–175; these read MTIK…KARS and VELP…AKNA. Residues 23-37 are compositionally biased toward gly residues; that stretch reads RGIGSGKGKTAGRGQ.

This sequence belongs to the universal ribosomal protein uL15 family. Part of the 50S ribosomal subunit.

Binds to the 23S rRNA. This is Large ribosomal subunit protein uL15 from Sphingopyxis alaskensis (strain DSM 13593 / LMG 18877 / RB2256) (Sphingomonas alaskensis).